A 216-amino-acid polypeptide reads, in one-letter code: FMN-dependent NADH:quinone oxidoreductase 2 (216 aa).

FMN is bound by residues S9, 15-17 (SVS), 96-99 (MYNF), and 140-143 (SRGG).

The protein belongs to the azoreductase type 1 family. As to quaternary structure, homodimer. Requires FMN as cofactor.

It carries out the reaction 2 a quinone + NADH + H(+) = 2 a 1,4-benzosemiquinone + NAD(+). It catalyses the reaction N,N-dimethyl-1,4-phenylenediamine + anthranilate + 2 NAD(+) = 2-(4-dimethylaminophenyl)diazenylbenzoate + 2 NADH + 2 H(+). Quinone reductase that provides resistance to thiol-specific stress caused by electrophilic quinones. Functionally, also exhibits azoreductase activity. Catalyzes the reductive cleavage of the azo bond in aromatic azo compounds to the corresponding amines. The protein is FMN-dependent NADH:quinone oxidoreductase 2 of Xanthomonas euvesicatoria pv. vesicatoria (strain 85-10) (Xanthomonas campestris pv. vesicatoria).